The sequence spans 191 residues: Phosphoheptose isomerase (191 aa).

An SIS domain is found at 37-191; the sequence is IAESFKQDGK…IIQLIEKEME (155 aa). 52–54 is a substrate binding site; it reads NGG. Residues H61 and E65 each coordinate Zn(2+). Substrate is bound by residues E65, 93-94, 119-121, S124, and Q172; these read ND and STS. 2 residues coordinate Zn(2+): Q172 and H180.

Belongs to the SIS family. GmhA subfamily. Homotetramer. Zn(2+) is required as a cofactor.

Its subcellular location is the cytoplasm. The enzyme catalyses 2 D-sedoheptulose 7-phosphate = D-glycero-alpha-D-manno-heptose 7-phosphate + D-glycero-beta-D-manno-heptose 7-phosphate. It functions in the pathway carbohydrate biosynthesis; D-glycero-D-manno-heptose 7-phosphate biosynthesis; D-glycero-alpha-D-manno-heptose 7-phosphate and D-glycero-beta-D-manno-heptose 7-phosphate from sedoheptulose 7-phosphate: step 1/1. The protein operates within bacterial outer membrane biogenesis; LPS core biosynthesis. Catalyzes the isomerization of sedoheptulose 7-phosphate in D-glycero-D-manno-heptose 7-phosphate. This is Phosphoheptose isomerase from Vibrio vulnificus (strain CMCP6).